Reading from the N-terminus, the 181-residue chain is Translation initiation factor IF-3 (181 aa).

It belongs to the IF-3 family. In terms of assembly, monomer.

It localises to the cytoplasm. IF-3 binds to the 30S ribosomal subunit and shifts the equilibrium between 70S ribosomes and their 50S and 30S subunits in favor of the free subunits, thus enhancing the availability of 30S subunits on which protein synthesis initiation begins. This chain is Translation initiation factor IF-3, found in Pseudoalteromonas translucida (strain TAC 125).